The sequence spans 2216 residues: Protein Ycf2 (2216 aa).

1567–1574 (GSIGTGRS) lines the ATP pocket.

Belongs to the Ycf2 family.

Its subcellular location is the plastid stroma. Probable ATPase of unknown function. Its presence in a non-photosynthetic plant (Epifagus virginiana) and experiments in tobacco indicate that it has an essential function which is probably not related to photosynthesis. This Epifagus virginiana (Beechdrops) protein is Protein Ycf2.